A 603-amino-acid chain; its full sequence is MASASASKYNSHSLENESIKKVSQDGVSQDVSETVPRLPGELLITEKEVIYICPFNGPIKGRVYITNYRLYLRSLETDSALILDVPLGVISRIEKMGGATSRGENSYGLDITCKDLRNLRFALKQEGHSRRDMFEILVKHAFPLAHNLPLFAFVNEEKFNVDGWTVYNPVEEYRRQGLPNHHWRISFINKCYELCETYPALLVVPYRTSDDDLRRIATFRSRNRLPVLSWIHPENKMVIMRCSQPLVGMSGKRNKDDEKYLDVIRETNKQTSKLMIYDARPSVNAVANKATGGGYESDDAYQNSELSFLDIHNIHVMRESLKKVKDIVYPNIEESHWLSSLESTHWLEHIKLVLTGAIQVADQVSSGKSSVLVHCSDGWDRTAQLTSLAMLMLDSFYRTIEGFEILVQKEWISFGHKFASRIGHGDKNHADADRSPIFLQFIDCVWQMSKQFPTAFEFNEGFLITVLDHLYSCRFGTFLFNCDSARERQKLTERTVSLWSLINSNKDKFKNPFYTKEINRVLYPVASMRHLELWVNYYIRWNPRVKQQQPNPVEQRYMELLALRDDYIKRLEELQLANSAKLADAPASTSSSSQMVPHVQTHF.

Phosphoserine is present on residues S13 and S18. The region spanning 29-97 (QDVSETVPRL…GVISRIEKMG (69 aa)) is the GRAM domain. In terms of domain architecture, Myotubularin phosphatase spans 163-538 (GWTVYNPVEE…RHLELWVNYY (376 aa)). A 1,2-diacyl-sn-glycero-3-phospho-(1D-myo-inositol-3,5-bisphosphate) is bound by residues N288, N313, and I314. Residues N288, N313, and I314 each contribute to the a 1,2-diacyl-sn-glycero-3-phospho-(1D-myo-inositol-3-phosphate) site. The Phosphocysteine intermediate role is filled by C375. Positions 376, 377, 378, 379, 380, 381, 417, and 421 each coordinate a 1,2-diacyl-sn-glycero-3-phospho-(1D-myo-inositol-3,5-bisphosphate). Residues S376, D377, G378, W379, D380, and R381 each contribute to the a 1,2-diacyl-sn-glycero-3-phospho-(1D-myo-inositol-3-phosphate) site. A 1,2-diacyl-sn-glycero-3-phospho-(1D-myo-inositol-3-phosphate) is bound at residue R421. At T495 the chain carries Phosphothreonine. A Phosphoserine modification is found at S588.

It belongs to the protein-tyrosine phosphatase family. Non-receptor class myotubularin subfamily. Heterodimer with MTMR12. Interacts with KMT2A/MLL1 (via SET domain). Interacts with DES in skeletal muscle but not in cardiac muscle. Interacts with SPEG. As to expression, widely expressed with highest levels detected in heart and muscle and low levels in brain (at protein level). Expressed in skeletal muscles (at protein level).

The protein localises to the cytoplasm. Its subcellular location is the cell membrane. It is found in the cell projection. It localises to the filopodium. The protein resides in the ruffle. The protein localises to the late endosome. Its subcellular location is the myofibril. It is found in the sarcomere. The catalysed reaction is a 1,2-diacyl-sn-glycero-3-phospho-(1D-myo-inositol-3-phosphate) + H2O = a 1,2-diacyl-sn-glycero-3-phospho-(1D-myo-inositol) + phosphate. It carries out the reaction a 1,2-diacyl-sn-glycero-3-phospho-(1D-myo-inositol-3,5-bisphosphate) + H2O = a 1,2-diacyl-sn-glycero-3-phospho-(1D-myo-inositol-5-phosphate) + phosphate. It catalyses the reaction 1,2-dioctanoyl-sn-glycero-3-phospho-(1-D-myo-inositol-3-phosphate) + H2O = 1,2-dioctanoyl-sn-glycero-3-phospho-(1D-myo-inositol) + phosphate. The enzyme catalyses 1,2-dioctanoyl-sn-glycero-3-phospho-(1D-myo-inositol-3,5-bisphosphate) + H2O = 1,2-dioctanoyl-sn-glycero-3-phospho-(1D-myo-inositol-5-phosphate) + phosphate. The catalysed reaction is 1,2-dihexadecanoyl-sn-glycero-3-phospho-(1D-myo-inositol-3,5-phosphate) + H2O = 1,2-dihexadecanoyl-sn-glycero-3-phospho-(1D-myo-inositol-5-phosphate) + phosphate. With respect to regulation, allosterically activated by phosphatidylinositol 5-phosphate (PI5P). Lipid phosphatase which dephosphorylates phosphatidylinositol 3-monophosphate (PI3P) and phosphatidylinositol 3,5-bisphosphate (PI(3,5)P2). Has also been shown to dephosphorylate phosphotyrosine- and phosphoserine-containing peptides. Negatively regulates EGFR degradation through regulation of EGFR trafficking from the late endosome to the lysosome. Plays a role in vacuolar formation and morphology. Regulates desmin intermediate filament assembly and architecture. Plays a role in mitochondrial morphology and positioning. Required for skeletal muscle maintenance but not for myogenesis. In skeletal muscles, stabilizes MTMR12 protein levels. The sequence is that of Myotubularin from Mus musculus (Mouse).